The sequence spans 351 residues: ATP-dependent protease ATP-binding subunit-like protein (351 aa).

The tract at residues 1–26 is disordered; it reads MPYITDMLRDRNSAATPPAEERSEPV. 79–86 provides a ligand contact to ATP; sequence GPTGVGKT.

The protein belongs to the ClpA/ClpB family.

The polypeptide is ATP-dependent protease ATP-binding subunit-like protein (Rhodococcus erythropolis (Arthrobacter picolinophilus)).